A 124-amino-acid polypeptide reads, in one-letter code: Large ribosomal subunit protein bL12 (124 aa).

This sequence belongs to the bacterial ribosomal protein bL12 family. In terms of assembly, homodimer. Part of the ribosomal stalk of the 50S ribosomal subunit. Forms a multimeric L10(L12)X complex, where L10 forms an elongated spine to which 2 to 4 L12 dimers bind in a sequential fashion. Binds GTP-bound translation factors.

Functionally, forms part of the ribosomal stalk which helps the ribosome interact with GTP-bound translation factors. Is thus essential for accurate translation. The chain is Large ribosomal subunit protein bL12 from Liberibacter africanus subsp. capensis.